A 37-amino-acid polypeptide reads, in one-letter code: Protein YnaM (37 aa).

A helical membrane pass occupies residues 4–24 (ILIITSLLIIFSIFSHALIKL).

The protein resides in the cell inner membrane. This chain is Protein YnaM, found in Escherichia coli (strain K12).